The following is a 1507-amino-acid chain: Protein TIC 214 (1507 aa).

The next 6 helical transmembrane spans lie at 4-24, 53-73, 81-101, 129-149, 163-183, and 202-222; these read IYLVPFFLGTFSGFLATLPIG, TILLASLCGLIFAQFLFVLAL, LWVKPHFFSFFFVLVLFIYLY, AFLETLLLQLLNPVVLPNPVF, ISTFFAGNFLGLLSGYGIFFL, and LVKIKIHQFFGIILVIFSFLC.

It belongs to the TIC214 family. Part of the Tic complex.

It localises to the plastid. The protein resides in the chloroplast inner membrane. In terms of biological role, involved in protein precursor import into chloroplasts. May be part of an intermediate translocation complex acting as a protein-conducting channel at the inner envelope. The sequence is that of Protein TIC 214 from Staurastrum punctulatum (Green alga).